Here is a 527-residue protein sequence, read N- to C-terminus: Pentatricopeptide repeat-containing protein At4g25270, chloroplastic (527 aa).

Residues 1–47 constitute a chloroplast transit peptide; the sequence is MVSIVVHKPSFSYPSVSSSSMKKKPRHHQQLKQHRQNQYNNNGFTSL. The segment at 12–44 is disordered; it reads SYPSVSSSSMKKKPRHHQQLKQHRQNQYNNNGF. The segment covering 21–35 has biased composition (basic residues); the sequence is MKKKPRHHQQLKQHR. 10 PPR repeats span residues 126 to 156, 159 to 193, 194 to 228, 229 to 259, 260 to 294, 295 to 326, 327 to 361, 367 to 389, 390 to 425, and 426 to 457; these read NLGI…MSKR, SPFA…GVKP, DRFT…GFGY, DVYV…IPHK, DYVS…GIEP, DKVA…GMEW, ELSV…DTVS, SAHS…NAKP, DGIT…GIDP, and KMEH…MGLE. The interval 462–527 is type E motif; degenerate; sequence VWGALLYACY…QMMVDRGLET (66 aa).

Belongs to the PPR family. PCMP-E subfamily.

It is found in the plastid. Its subcellular location is the chloroplast. The chain is Pentatricopeptide repeat-containing protein At4g25270, chloroplastic (PCMP-E53) from Arabidopsis thaliana (Mouse-ear cress).